Consider the following 410-residue polypeptide: Putative competence-damage inducible protein (410 aa).

Belongs to the CinA family.

This Finegoldia magna (strain ATCC 29328 / DSM 20472 / WAL 2508) (Peptostreptococcus magnus) protein is Putative competence-damage inducible protein.